Consider the following 204-residue polypeptide: Large ribosomal subunit protein uL3c (204 aa).

Residues 126-155 (HNFTRGPMTHGSKNHREPGSIGQGSTPAKV) are disordered.

The protein belongs to the universal ribosomal protein uL3 family. In terms of assembly, part of the 50S ribosomal subunit.

Its subcellular location is the plastid. The protein resides in the chloroplast. In terms of biological role, one of the primary rRNA binding proteins, it binds directly near the 3'-end of the 23S rRNA, where it nucleates assembly of the 50S subunit. The chain is Large ribosomal subunit protein uL3c (rpl3) from Guillardia theta (Cryptophyte).